The primary structure comprises 137 residues: Gonadotropin subunit beta-2 (137 aa).

The first 24 residues, 1-24, serve as a signal peptide directing secretion; the sequence is MLPFMLSSFLGASPSIWPLAPAEA. 6 cysteine pairs are disulfide-bonded: C30/C76, C44/C91, C47/C129, C55/C107, C59/C109, and C112/C119. N34 carries an N-linked (GlcNAc...) asparagine glycan.

This sequence belongs to the glycoprotein hormones subunit beta family. In terms of assembly, heterodimer of an alpha and a beta chain.

The protein localises to the secreted. In terms of biological role, involved in gametogenesis and steroidogenesis. The sequence is that of Gonadotropin subunit beta-2 (cgbb) from Acanthopagrus latus (Yellowfin seabream).